A 440-amino-acid chain; its full sequence is Protein CyaD (440 aa).

The Cytoplasmic segment spans residues 1-55 (MRRALRELAARHGRVLAASWRQRHRRPAGWFDPVETEFLPSALSLQERPISPTAR). A helical transmembrane segment spans residues 56–75 (WLARILMALAAGALVWSVVG). Topologically, residues 76–440 (KTEIVVHAAG…RHAGESLGER (365 aa)) are periplasmic.

It belongs to the membrane fusion protein (MFP) (TC 8.A.1) family.

The protein resides in the cell inner membrane. Functionally, cyaD is necessary for transport of calmodulin-sensitive adenylate cyclase-hemolysin (cyclolysin). The chain is Protein CyaD (cyaD) from Bordetella pertussis (strain ATCC 9797 / DSM 5571 / CCUG 30873 / LMG 14455 / NCTC 10739 / 18323).